Here is a 395-residue protein sequence, read N- to C-terminus: Phosphonoacetaldehyde reductase (395 aa).

Residues D199, H268, and H282 each contribute to the Fe cation site.

The protein belongs to the iron-containing alcohol dehydrogenase family. It depends on Fe cation as a cofactor.

It catalyses the reaction 2-hydroxyethylphosphonate + NAD(+) = phosphonoacetaldehyde + NADH + H(+). Its pathway is secondary metabolite biosynthesis; bialaphos biosynthesis. Catalyzes the reduction of phosphonoacetaldehyde to 2-hydroxyethylphosphonate, a step in the biosynthesis of phosphinothricin tripeptide. Phosphinothricin tripeptide (PTT), also known as bialaphos (BA), is a natural-product antibiotic and potent herbicide. Can use both NAD and NADP but the preferred substrate is NAD. This is Phosphonoacetaldehyde reductase (phpC) from Streptomyces viridochromogenes (strain DSM 40736 / JCM 4977 / BCRC 1201 / Tue 494).